We begin with the raw amino-acid sequence, 250 residues long: 2,3-bisphosphoglycerate-dependent phosphoglycerate mutase (250 aa).

Residues 10–17 (RHGESQWN), 23–24 (TG), arginine 62, 89–92 (ERHY), lysine 100, 116–117 (RR), and 185–186 (GN) each bind substrate. Histidine 11 (tele-phosphohistidine intermediate) is an active-site residue. Catalysis depends on glutamate 89, which acts as the Proton donor/acceptor.

Belongs to the phosphoglycerate mutase family. BPG-dependent PGAM subfamily. Homodimer.

The enzyme catalyses (2R)-2-phosphoglycerate = (2R)-3-phosphoglycerate. The protein operates within carbohydrate degradation; glycolysis; pyruvate from D-glyceraldehyde 3-phosphate: step 3/5. In terms of biological role, catalyzes the interconversion of 2-phosphoglycerate and 3-phosphoglycerate. In Klebsiella pneumoniae (strain 342), this protein is 2,3-bisphosphoglycerate-dependent phosphoglycerate mutase.